A 358-amino-acid chain; its full sequence is Dual-specificity RNA methyltransferase RlmN (358 aa).

Catalysis depends on Glu-91, which acts as the Proton acceptor. In terms of domain architecture, Radical SAM core spans 98–335 (SQGRITQCLS…AIIRKSKGAD (238 aa)). A disulfide bridge links Cys-105 with Cys-340. 3 residues coordinate [4Fe-4S] cluster: Cys-112, Cys-116, and Cys-119. Residues 164-165 (GE), Ser-196, 219-221 (SLH), and Asn-295 contribute to the S-adenosyl-L-methionine site. Residue Cys-340 is the S-methylcysteine intermediate of the active site.

It belongs to the radical SAM superfamily. RlmN family. It depends on [4Fe-4S] cluster as a cofactor.

The protein resides in the cytoplasm. It catalyses the reaction adenosine(2503) in 23S rRNA + 2 reduced [2Fe-2S]-[ferredoxin] + 2 S-adenosyl-L-methionine = 2-methyladenosine(2503) in 23S rRNA + 5'-deoxyadenosine + L-methionine + 2 oxidized [2Fe-2S]-[ferredoxin] + S-adenosyl-L-homocysteine. The catalysed reaction is adenosine(37) in tRNA + 2 reduced [2Fe-2S]-[ferredoxin] + 2 S-adenosyl-L-methionine = 2-methyladenosine(37) in tRNA + 5'-deoxyadenosine + L-methionine + 2 oxidized [2Fe-2S]-[ferredoxin] + S-adenosyl-L-homocysteine. Functionally, specifically methylates position 2 of adenine 2503 in 23S rRNA and position 2 of adenine 37 in tRNAs. m2A2503 modification seems to play a crucial role in the proofreading step occurring at the peptidyl transferase center and thus would serve to optimize ribosomal fidelity. The protein is Dual-specificity RNA methyltransferase RlmN of Oleidesulfovibrio alaskensis (strain ATCC BAA-1058 / DSM 17464 / G20) (Desulfovibrio alaskensis).